The chain runs to 162 residues: Peptidyl-prolyl cis-trans isomerase (162 aa).

At Ser-2 the chain carries N-acetylserine. Positions 5–161 (YFDVEADGQP…ARIVVAKSGE (157 aa)) constitute a PPIase cyclophilin-type domain. Glycyl lysine isopeptide (Lys-Gly) (interchain with G-Cter in ubiquitin) cross-links involve residues Lys-29 and Lys-42. Phosphothreonine is present on Thr-71. Residues Lys-123 and Lys-139 each participate in a glycyl lysine isopeptide (Lys-Gly) (interchain with G-Cter in ubiquitin) cross-link. Residues Ser-142 and Ser-145 each carry the phosphoserine modification. Residues Lys-151 and Lys-158 each participate in a glycyl lysine isopeptide (Lys-Gly) (interchain with G-Cter in ubiquitin) cross-link.

Belongs to the cyclophilin-type PPIase family. PPIase A subfamily. As to quaternary structure, interacts with a complex composed of SIN3 and RPD3. Identified in the Set3C complex with HOS2, HST1, SNT1, SIF2, HOS4/YIL112W and SET3.

It localises to the cytoplasm. It is found in the nucleus. The protein resides in the mitochondrion intermembrane space. It catalyses the reaction [protein]-peptidylproline (omega=180) = [protein]-peptidylproline (omega=0). Binds cyclosporin A (CsA). CsA mediates some of its effects via an inhibitory action on PPIase. In terms of biological role, PPIases accelerate the folding of proteins. It catalyzes the cis-trans isomerization of proline imidic peptide bonds in oligopeptides. Involved in histone deacetylase complexes, suggesting a function in chromatin. Imports fructose-1,6-bisphosphatase (FBPase) into the intermediate vacuole import and degradation (Vid) vesicles. Regulates the meiotic gene program via the Set3C histone deacetylase complex to promote efficient sporulation, and the prolyl-isomerase activity is required for this function. The polypeptide is Peptidyl-prolyl cis-trans isomerase (CPR1) (Saccharomyces cerevisiae (strain ATCC 204508 / S288c) (Baker's yeast)).